A 418-amino-acid chain; its full sequence is Ig-like V-type domain-containing protein FAM187A (418 aa).

Positions 1–18 (MRLAPTTVLLWAWGSLQA) are cleaved as a signal peptide. Residues 19 to 376 (FEIVEKENIF…ASLSDPETRT (358 aa)) are Extracellular-facing. The Ig-like V-type domain occupies 267 to 361 (PWVPQVPIQF…IAGFRLGVTS (95 aa)). Cysteine 289 and cysteine 345 are disulfide-bonded. N-linked (GlcNAc...) asparagine glycosylation is present at asparagine 317. The helical transmembrane segment at 377–397 (AVELTLIGYLLIAVVFVTIHL) threads the bilayer. Residues 398 to 418 (CRCCCQSRCCPNFSAQTLLQL) are Cytoplasmic-facing.

It belongs to the FAM187 family.

It is found in the membrane. The sequence is that of Ig-like V-type domain-containing protein FAM187A (Fam187a) from Rattus norvegicus (Rat).